The sequence spans 72 residues: Potassium channel toxin kappa-KTx 5.1 (72 aa).

Positions 1-23 are cleaved as a signal peptide; it reads MKLLPLLFVILIVCAILPDEASC. Residues 24–43 constitute a propeptide that is removed on maturation; that stretch reads DQSELERKEENFKDESREIV. 2 cysteine pairs are disulfide-bonded: Cys47/Cys64 and Cys51/Cys60. His70 is subject to Histidine amide.

It belongs to the short scorpion toxin superfamily. Potassium channel inhibitor kappa-KTx family. Kappa-KTx 5 subfamily. As to expression, expressed by the venom gland.

The protein resides in the secreted. Functionally, weak blocker of potassium channels Kv1.1/KCNA1 (IC(50)=578.5 nM-9.9 uM) and Kv1.6/KCNA6 (~60% block at 30 uM of toxin). Acts by binding to the pore and occluding it. Has a voltage-dependent mode of action, which can be explained by a high content of basic residues causing repulsions at higher membrane voltages. Shows a weak interaction with muscle-type nicotinic acetylcholine receptors (nAChR), since it inhibits alpha-bungarotoxin binding to muscle-type nAChR from T.californica (IC(50)=1.4 uM). This suggests it probably weakly inhibits muscle nAChR. The mode of binding to potassium channels of this toxin differs from its homologs (including HefuTx1), since it lacks the key aromatic residue of the functional dyad. In contrast, its functionally important site is composed of a number of basic residues. This chain is Potassium channel toxin kappa-KTx 5.1, found in Heterometrus laoticus (Thai giant scorpion).